We begin with the raw amino-acid sequence, 541 residues long: Protein wntless homolog (541 aa).

At 1–15 (MAGAIIENMSTKKLC) the chain is on the cytoplasmic side. A helical transmembrane segment spans residues 16-36 (IVGGILLVFQIIAFLVGGLIA). The Lumenal segment spans residues 37-232 (PGPTTAVSYM…GIHQNGGFTK (196 aa)). The tract at residues 101–232 (MEMSPWFQFM…GIHQNGGFTK (132 aa)) is interaction with Wnt proteins. A helical membrane pass occupies residues 233 to 253 (VWFAMKTFLTPSIFIIMVWYW). Residues 254 to 268 (RRITMMSRPPVLLEK) are Cytoplasmic-facing. A helical membrane pass occupies residues 269–289 (VIFALGISMTFINIPVEWFSI). Residues 290 to 303 (GFDWTWMLLFGDIR) lie on the Lumenal side of the membrane. A helical transmembrane segment spans residues 304–324 (QGIFYAMLLSFWIIFCGEHMM). At 325-331 (DQHERNH) the chain is on the cytoplasmic side. The helical transmembrane segment at 332-352 (IAGYWKQVGPIAVGSFCLFIF) threads the bilayer. Residues 353-380 (DMCERGVQLTNPFYSIWTTDIGTELAMA) lie on the Lumenal side of the membrane. Residues 381 to 401 (FIIVAGICLCLYFLFLCFMVF) traverse the membrane as a helical segment. Residues 402–431 (QVFRNISGKQSSLPAMSKVRRLHYEGLIFR) are Cytoplasmic-facing. The chain crosses the membrane as a helical span at residues 432-452 (FKFLMLITLACAAMTVIFFIV). Topologically, residues 453-471 (SQVTEGHWKWGGVTVQVNS) are lumenal. Residues 472–492 (AFFTGIYGMWNLYVFALMFLY) traverse the membrane as a helical segment. Topologically, residues 493 to 541 (APSHKNYGEDQSNGDLGVHSGEELQLTTTITHVDGPTEIYKLTRKEAQE) are cytoplasmic.

Belongs to the wntless family. In terms of assembly, interacts with WNT3A. Interacts with WNT1, WNT3 and WNT5A. Post-translationally, N-glycosylated.

The protein localises to the golgi apparatus membrane. It is found in the cytoplasmic vesicle membrane. Its subcellular location is the cell membrane. The protein resides in the endoplasmic reticulum membrane. It localises to the early endosome membrane. Its function is as follows. Regulates Wnt proteins sorting and secretion in a feedback regulatory mechanism. This reciprocal interaction plays a key role in the regulation of expression, subcellular location, binding and organelle-specific association of Wnt proteins. Plays also an important role in establishment of the anterior-posterior body axis formation during development. The polypeptide is Protein wntless homolog (WLS) (Homo sapiens (Human)).